Here is a 213-residue protein sequence, read N- to C-terminus: 3,4-dihydroxy-2-butanone 4-phosphate synthase (213 aa).

D-ribulose 5-phosphate contacts are provided by residues 37–38 (RE), Asp42, 150–154 (RAGHT), and Glu174. Residue Glu38 coordinates Mg(2+). Mg(2+) is bound at residue His153.

It belongs to the DHBP synthase family. As to quaternary structure, homodimer. The cofactor is Mg(2+). Mn(2+) is required as a cofactor.

The catalysed reaction is D-ribulose 5-phosphate = (2S)-2-hydroxy-3-oxobutyl phosphate + formate + H(+). It functions in the pathway cofactor biosynthesis; riboflavin biosynthesis; 2-hydroxy-3-oxobutyl phosphate from D-ribulose 5-phosphate: step 1/1. Functionally, catalyzes the conversion of D-ribulose 5-phosphate to formate and 3,4-dihydroxy-2-butanone 4-phosphate. The chain is 3,4-dihydroxy-2-butanone 4-phosphate synthase from Wigglesworthia glossinidia brevipalpis.